The following is a 319-amino-acid chain: Acetyl-coenzyme A carboxylase carboxyl transferase subunit alpha (319 aa).

Residues 38 to 292 form the CoA carboxyltransferase C-terminal domain; the sequence is ALDKKAADLL…GKAIASMLAG (255 aa).

It belongs to the AccA family. Acetyl-CoA carboxylase is a heterohexamer composed of biotin carboxyl carrier protein (AccB), biotin carboxylase (AccC) and two subunits each of ACCase subunit alpha (AccA) and ACCase subunit beta (AccD).

It is found in the cytoplasm. It catalyses the reaction N(6)-carboxybiotinyl-L-lysyl-[protein] + acetyl-CoA = N(6)-biotinyl-L-lysyl-[protein] + malonyl-CoA. It functions in the pathway lipid metabolism; malonyl-CoA biosynthesis; malonyl-CoA from acetyl-CoA: step 1/1. In terms of biological role, component of the acetyl coenzyme A carboxylase (ACC) complex. First, biotin carboxylase catalyzes the carboxylation of biotin on its carrier protein (BCCP) and then the CO(2) group is transferred by the carboxyltransferase to acetyl-CoA to form malonyl-CoA. The polypeptide is Acetyl-coenzyme A carboxylase carboxyl transferase subunit alpha (Jannaschia sp. (strain CCS1)).